Reading from the N-terminus, the 431-residue chain is Adenylosuccinate synthetase (431 aa).

GTP contacts are provided by residues 12–18 and 40–42; these read GDEGKGK and GHT. The active-site Proton acceptor is Asp13. Mg(2+) contacts are provided by Asp13 and Gly40. IMP contacts are provided by residues 13-16, 38-41, Thr130, Arg144, Gln225, Thr240, and Arg304; these read DEGK and NAGH. The Proton donor role is filled by His41. Residue 300 to 306 coordinates substrate; sequence STTGRPR. Residues Arg306, 332–334, and 414–416 contribute to the GTP site; these read KMD and SIG.

It belongs to the adenylosuccinate synthetase family. In terms of assembly, homodimer. Mg(2+) is required as a cofactor.

The protein localises to the cytoplasm. It catalyses the reaction IMP + L-aspartate + GTP = N(6)-(1,2-dicarboxyethyl)-AMP + GDP + phosphate + 2 H(+). Its pathway is purine metabolism; AMP biosynthesis via de novo pathway; AMP from IMP: step 1/2. Plays an important role in the de novo pathway of purine nucleotide biosynthesis. Catalyzes the first committed step in the biosynthesis of AMP from IMP. The protein is Adenylosuccinate synthetase of Syntrophotalea carbinolica (strain DSM 2380 / NBRC 103641 / GraBd1) (Pelobacter carbinolicus).